A 201-amino-acid chain; its full sequence is Holliday junction branch migration complex subunit RuvA (201 aa).

The tract at residues 1 to 63 is domain I; that stretch reads MYAYIKGKLS…EDAQLLYGFM (63 aa). The segment at 64 to 142 is domain II; that stretch reads SEEEKGMFLS…ITEENPETLL (79 aa). The flexible linker stretch occupies residues 143 to 153; that stretch reads NFEGSESNQTS. The segment at 153–201 is domain III; sequence SPILDEALLALEALGYSKRELNKVEKKLQAESYTSVDEAVKAGLKILVS.

It belongs to the RuvA family. In terms of assembly, homotetramer. Forms an RuvA(8)-RuvB(12)-Holliday junction (HJ) complex. HJ DNA is sandwiched between 2 RuvA tetramers; dsDNA enters through RuvA and exits via RuvB. An RuvB hexamer assembles on each DNA strand where it exits the tetramer. Each RuvB hexamer is contacted by two RuvA subunits (via domain III) on 2 adjacent RuvB subunits; this complex drives branch migration. In the full resolvosome a probable DNA-RuvA(4)-RuvB(12)-RuvC(2) complex forms which resolves the HJ.

It is found in the cytoplasm. Functionally, the RuvA-RuvB-RuvC complex processes Holliday junction (HJ) DNA during genetic recombination and DNA repair, while the RuvA-RuvB complex plays an important role in the rescue of blocked DNA replication forks via replication fork reversal (RFR). RuvA specifically binds to HJ cruciform DNA, conferring on it an open structure. The RuvB hexamer acts as an ATP-dependent pump, pulling dsDNA into and through the RuvAB complex. HJ branch migration allows RuvC to scan DNA until it finds its consensus sequence, where it cleaves and resolves the cruciform DNA. The polypeptide is Holliday junction branch migration complex subunit RuvA (Staphylococcus carnosus (strain TM300)).